Consider the following 187-residue polypeptide: Signal peptidase complex catalytic subunit SEC11 (187 aa).

Residues 1 to 14 (MLSSLSPYMANPRN) are Cytoplasmic-facing. The helical; Signal-anchor for type II membrane protein transmembrane segment at 15–33 (TLSQVLNFGLVLSSAFMVW) threads the bilayer. Residues 34-187 (KTLSVITNST…MGLMVMLQRE (154 aa)) are Lumenal-facing. Asparagine 41 carries N-linked (GlcNAc...) asparagine glycosylation. Active-site charge relay system residues include serine 53 and histidine 92. N-linked (GlcNAc...) asparagine glycosylation is present at asparagine 125. Aspartate 129 (charge relay system) is an active-site residue. A C-terminal short (CTS) helix region spans residues 173-184 (VLLGFMGLMVML).

This sequence belongs to the peptidase S26B family. In terms of assembly, component of the signal peptidase complex (SPC) composed of a catalytic subunit SEC11 and three accessory subunits SPC1, SPC2 and SPC3. The complex induces a local thinning of the ER membrane which is used to measure the length of the signal peptide (SP) h-region of protein substrates. This ensures the selectivity of the complex towards h-regions shorter than 18-20 amino acids. SPC associates with the translocon complex.

It localises to the endoplasmic reticulum membrane. The catalysed reaction is Cleavage of hydrophobic, N-terminal signal or leader sequences from secreted and periplasmic proteins.. In terms of biological role, catalytic component of the signal peptidase complex (SPC) which catalyzes the cleavage of N-terminal signal sequences from nascent proteins as they are translocated into the lumen of the endoplasmic reticulum. Specifically cleaves N-terminal signal peptides that contain a hydrophobic alpha-helix (h-region) shorter than 18-20 amino acids. This chain is Signal peptidase complex catalytic subunit SEC11 (SEC11), found in Ajellomyces capsulatus (strain H88) (Darling's disease fungus).